The following is a 289-amino-acid chain: NAC domain-containing protein 2 (289 aa).

Residues Leu-7–Lys-158 enclose the NAC domain.

As to quaternary structure, interacts with KIN10 and KIN11.

Its subcellular location is the nucleus. This Arabidopsis thaliana (Mouse-ear cress) protein is NAC domain-containing protein 2 (NAC002).